Here is a 639-residue protein sequence, read N- to C-terminus: Chaperone protein HtpG (639 aa).

The interval Met1 to Arg343 is a; substrate-binding. The b stretch occupies residues Glu344–Arg564. The c stretch occupies residues Leu565–Glu639.

This sequence belongs to the heat shock protein 90 family. Homodimer.

The protein localises to the cytoplasm. In terms of biological role, molecular chaperone. Has ATPase activity. This Nitrosospira multiformis (strain ATCC 25196 / NCIMB 11849 / C 71) protein is Chaperone protein HtpG.